The chain runs to 715 residues: ATP-dependent zinc metalloprotease YME1L1 (715 aa).

The interval 31-54 (VSVNTSASPKQHRDTVAEHEAPSS) is disordered. The span at 41–52 (QHRDTVAEHEAP) shows a compositional bias: basic and acidic residues. Residues 238–258 (ILFVLLLFGIYGLLKNPFLSV) traverse the membrane as a helical segment. Residues Val-283, Thr-325, Gly-326, Lys-327, Thr-328, and Leu-329 each coordinate ATP. Residue His-541 coordinates Zn(2+). Residue Glu-542 is part of the active site. 2 residues coordinate Zn(2+): His-545 and Asp-619.

It in the N-terminal section; belongs to the AAA ATPase family. In the C-terminal section; belongs to the peptidase M41 family. As to quaternary structure, homohexamer; may also form heterohexamers. Exists in several complexes of 600-1100 kDa. Interacts with AFG1L. Requires Zn(2+) as cofactor. In terms of processing, proteolytically processed by mitochondrial processing peptidase (MPP) to generate the mature form. Degraded in an OMA1-dependent manner in response to oxidative stress.

Its subcellular location is the mitochondrion inner membrane. The protein localises to the mitochondrion. The enzyme catalyses ATP + H2O = ADP + phosphate + H(+). Its function is as follows. ATP-dependent metalloprotease that catalyzes the degradation of folded and unfolded proteins with a suitable degron sequence in the mitochondrial intermembrane region. Plays an important role in regulating mitochondrial morphology and function by cleaving OPA1 at position S2, giving rise to a form of OPA1 that promotes maintenance of normal mitochondrial structure and mitochondrial protein metabolism. Ensures cell proliferation, maintains normal cristae morphology and complex I respiration activity, promotes antiapoptotic activity and protects mitochondria from the accumulation of oxidatively damaged membrane proteins. Required to control the accumulation of nonassembled respiratory chain subunits (NDUFB6, OX4 and ND1). Involved in the mitochondrial adaptation in response to various signals, such as stress or developmental cues, by mediating degradation of mitochondrial proteins to rewire the mitochondrial proteome. Catalyzes degradation of mitochondrial proteins, such as translocases, lipid transfer proteins and metabolic enzymes in response to nutrient starvation in order to limit mitochondrial biogenesis: mechanistically, YME1L is activated by decreased phosphatidylethanolamine levels caused by LPIN1 activity in response to mTORC1 inhibition. Acts as a regulator of adult neural stem cell self-renewal by promoting mitochondrial proteome rewiring, preserving neural stem and progenitor cells self-renewal. Required for normal, constitutive degradation of PRELID1. Catalyzes the degradation of OMA1 in response to membrane depolarization. Mediates degradation of TIMM17A downstream of the integrated stress response (ISR). Catalyzes degradation of MICU1 when MICU1 is not assembled via an interchain disulfide. This chain is ATP-dependent zinc metalloprotease YME1L1 (Yme1l1), found in Rattus norvegicus (Rat).